Here is a 316-residue protein sequence, read N- to C-terminus: uncharacterized protein (316 aa).

At 1 to 70 the chain is on the cytoplasmic side; it reads SFAYSGNSES…NNDEIGIWNY (70 aa). Residues 71-91 form a helical membrane-spanning segment; sequence ISVAEMGGVLLFLSYWIWTCL. Position 92 (His-92) is a topological domain, lumenal. The helical transmembrane segment at 93–113 threads the bilayer; that stretch reads FSKIIFPAQKVICLYIFLFAL. The Cytoplasmic segment spans residues 114–170; that stretch reads NQTLQECIEEYVFSSECIKYRQFYSVYEIIDFLRTNFYRLFVIYCALGFGITRTVPK. A helical membrane pass occupies residues 171–191; sequence YLMIKGISIVIALCSVYWISL. Residues 192-194 lie on the Lumenal side of the membrane; it reads YKD. A helical membrane pass occupies residues 195 to 215; the sequence is VYVVSEIFDMIQYEVSPAIWV. The Cytoplasmic segment spans residues 216–245; sequence YSICHLLKQCTSVTTYENASKARFFRRMLN. A helical membrane pass occupies residues 246–266; sequence AFIFIFCASPMLHYLSNIIFG. The Lumenal portion of the chain corresponds to 267–316; the sequence is NFDYRLSVIIGDLFTFMEKIAFPCYIMFPTHNEALAYNRNVAEEAQEKMI.

Belongs to the UPF0742 family.

It is found in the endoplasmic reticulum. Its subcellular location is the membrane. This is an uncharacterized protein from Schizosaccharomyces pombe (strain 972 / ATCC 24843) (Fission yeast).